A 483-amino-acid chain; its full sequence is 6-phosphogluconate dehydrogenase, decarboxylating (483 aa).

NADP(+)-binding positions include glycine 10–glycine 15 and asparagine 33–threonine 35. N6-acetyllysine is present on lysine 38. A Phosphoserine modification is found at serine 57. NADP(+)-binding positions include valine 75–alanine 77 and asparagine 103. Residues asparagine 103, serine 129, and glycine 131 each contribute to the substrate site. Serine 129 bears the Phosphoserine mark. The active-site Proton acceptor is lysine 184. A substrate-binding site is contributed by histidine 187–asparagine 188. Residue glutamate 191 is the Proton donor of the active site. Positions 192, 261, 288, 447, and 453 each coordinate substrate. An NADP(+)-binding site is contributed by serine 478–tyrosine 481.

Belongs to the 6-phosphogluconate dehydrogenase family. Homodimer.

It is found in the cytoplasm. The enzyme catalyses 6-phospho-D-gluconate + NADP(+) = D-ribulose 5-phosphate + CO2 + NADPH. The protein operates within carbohydrate degradation; pentose phosphate pathway; D-ribulose 5-phosphate from D-glucose 6-phosphate (oxidative stage): step 3/3. Catalyzes the oxidative decarboxylation of 6-phosphogluconate to ribulose 5-phosphate and CO(2), with concomitant reduction of NADP to NADPH. The sequence is that of 6-phosphogluconate dehydrogenase, decarboxylating (PGD) from Ovis aries (Sheep).